A 134-amino-acid chain; its full sequence is uncharacterized protein (134 aa).

The protein resides in the mitochondrion. This is an uncharacterized protein from Saccharomyces cerevisiae (strain ATCC 204508 / S288c) (Baker's yeast).